The sequence spans 155 residues: SsrA-binding protein (155 aa).

A disordered region spans residues 135–155; that stretch reads KRQDIKQRDVERETRREIMRH.

Belongs to the SmpB family.

It localises to the cytoplasm. Required for rescue of stalled ribosomes mediated by trans-translation. Binds to transfer-messenger RNA (tmRNA), required for stable association of tmRNA with ribosomes. tmRNA and SmpB together mimic tRNA shape, replacing the anticodon stem-loop with SmpB. tmRNA is encoded by the ssrA gene; the 2 termini fold to resemble tRNA(Ala) and it encodes a 'tag peptide', a short internal open reading frame. During trans-translation Ala-aminoacylated tmRNA acts like a tRNA, entering the A-site of stalled ribosomes, displacing the stalled mRNA. The ribosome then switches to translate the ORF on the tmRNA; the nascent peptide is terminated with the 'tag peptide' encoded by the tmRNA and targeted for degradation. The ribosome is freed to recommence translation, which seems to be the essential function of trans-translation. In Oleidesulfovibrio alaskensis (strain ATCC BAA-1058 / DSM 17464 / G20) (Desulfovibrio alaskensis), this protein is SsrA-binding protein.